The following is a 584-amino-acid chain: 4-hydroxybenzoate decarboxylase subunit C (584 aa).

The protein belongs to the UbiD family. Component of the decarboxylase complex composed of the subunits B and C (Potential). The subunit D usually found in other organisms seems to be absent.

The enzyme catalyses 4-hydroxybenzoate + H(+) = phenol + CO2. With respect to regulation, the enzyme activity is enhanced by Mg(2+), Fe(2+), Mn(2+) and Ca(2+). No stimulation is observed with Cu(2+) and Zn(2+). Catalyzes the reversible decarboxylation of 4-hydroxybenzoate. The sequence is that of 4-hydroxybenzoate decarboxylase subunit C from Chlamydia pneumoniae (Chlamydophila pneumoniae).